Here is a 169-residue protein sequence, read N- to C-terminus: Peptide methionine sulfoxide reductase MsrA (169 aa).

The active site involves Cys13.

Belongs to the MsrA Met sulfoxide reductase family.

It catalyses the reaction L-methionyl-[protein] + [thioredoxin]-disulfide + H2O = L-methionyl-(S)-S-oxide-[protein] + [thioredoxin]-dithiol. It carries out the reaction [thioredoxin]-disulfide + L-methionine + H2O = L-methionine (S)-S-oxide + [thioredoxin]-dithiol. Its function is as follows. Has an important function as a repair enzyme for proteins that have been inactivated by oxidation. Catalyzes the reversible oxidation-reduction of methionine sulfoxide in proteins to methionine. The polypeptide is Peptide methionine sulfoxide reductase MsrA (Mycolicibacterium vanbaalenii (strain DSM 7251 / JCM 13017 / BCRC 16820 / KCTC 9966 / NRRL B-24157 / PYR-1) (Mycobacterium vanbaalenii)).